The sequence spans 513 residues: Serine/threonine-protein kinase pakH (513 aa).

The Protein kinase domain occupies 42 to 294 (FEIQEKLGEG…PSQLLDHPFI (253 aa)). ATP-binding positions include 48–56 (LGEGSFGSV) and Lys71. The Proton acceptor role is filled by Asp163. The disordered stretch occupies residues 313–358 (KSKKRKSIGPSVSPKQQPNDNNNNNNNNKPQFLSKLLNNNSNSSND). A compositionally biased stretch (low complexity) spans 331–357 (NDNNNNNNNNKPQFLSKLLNNNSNSSN). Residues 493–512 (IVLYSTLGLILVLSVFFKFF) form a helical membrane-spanning segment.

The protein belongs to the protein kinase superfamily. STE Ser/Thr protein kinase family. STE20 subfamily. Mg(2+) serves as cofactor.

It is found in the membrane. It catalyses the reaction L-seryl-[protein] + ATP = O-phospho-L-seryl-[protein] + ADP + H(+). It carries out the reaction L-threonyl-[protein] + ATP = O-phospho-L-threonyl-[protein] + ADP + H(+). The sequence is that of Serine/threonine-protein kinase pakH (pakH-1) from Dictyostelium discoideum (Social amoeba).